We begin with the raw amino-acid sequence, 285 residues long: Pantothenate synthetase (285 aa).

Residue 30–37 (MGFLHEGH) coordinates ATP. Catalysis depends on His-37, which acts as the Proton donor. Gln-61 is a binding site for (R)-pantoate. Position 61 (Gln-61) interacts with beta-alanine. 147-150 (GQKD) contacts ATP. Gln-153 is a (R)-pantoate binding site. ATP is bound by residues Val-176 and 184–187 (KSSR).

The protein belongs to the pantothenate synthetase family. As to quaternary structure, homodimer.

Its subcellular location is the cytoplasm. It catalyses the reaction (R)-pantoate + beta-alanine + ATP = (R)-pantothenate + AMP + diphosphate + H(+). The protein operates within cofactor biosynthesis; (R)-pantothenate biosynthesis; (R)-pantothenate from (R)-pantoate and beta-alanine: step 1/1. Catalyzes the condensation of pantoate with beta-alanine in an ATP-dependent reaction via a pantoyl-adenylate intermediate. In Listeria monocytogenes serovar 1/2a (strain ATCC BAA-679 / EGD-e), this protein is Pantothenate synthetase.